The primary structure comprises 304 residues: Putative S-adenosyl-L-methionine-dependent methyltransferase MAP_3385 (304 aa).

S-adenosyl-L-methionine is bound by residues D129 and 158–159 (DL).

This sequence belongs to the UPF0677 family.

Exhibits S-adenosyl-L-methionine-dependent methyltransferase activity. This Mycolicibacterium paratuberculosis (strain ATCC BAA-968 / K-10) (Mycobacterium paratuberculosis) protein is Putative S-adenosyl-L-methionine-dependent methyltransferase MAP_3385.